A 199-amino-acid chain; its full sequence is Type-4 uracil-DNA glycosylase (199 aa).

Residues C14 and C17 each contribute to the [4Fe-4S] cluster site. Residues 41–43, F55, and N81 contribute to the uracil site; that span reads GEA. The tract at residues 77-114 is pseudo-FCL; that stretch reads VYITNVLKCRPPNNRDPTPEEVEKCGDYLVRQLEAIRP. C85 and C101 together coordinate [4Fe-4S] cluster. H163 lines the uracil pocket.

Belongs to the uracil-DNA glycosylase (UDG) superfamily. Type 4 (UDGa) family.

It carries out the reaction Hydrolyzes single-stranded DNA or mismatched double-stranded DNA and polynucleotides, releasing free uracil.. With respect to regulation, product-inhibited by both uracil and apurinic/apyrimidinic sites. Functionally, removes uracil bases that are present in DNA as a result of either deamination of cytosine or misincorporation of dUMP instead of dTMP. Can remove uracil from double-stranded DNA containing either a U/G or U/A base pair as well as from single-stranded DNA. The protein is Type-4 uracil-DNA glycosylase of Archaeoglobus fulgidus (strain ATCC 49558 / DSM 4304 / JCM 9628 / NBRC 100126 / VC-16).